The primary structure comprises 309 residues: tRNA dimethylallyltransferase (309 aa).

15 to 22 (GPTASGKS) is a binding site for ATP. 17-22 (TASGKS) lines the substrate pocket. The tract at residues 40 to 43 (DSRQ) is interaction with substrate tRNA.

It belongs to the IPP transferase family. As to quaternary structure, monomer. It depends on Mg(2+) as a cofactor.

The enzyme catalyses adenosine(37) in tRNA + dimethylallyl diphosphate = N(6)-dimethylallyladenosine(37) in tRNA + diphosphate. In terms of biological role, catalyzes the transfer of a dimethylallyl group onto the adenine at position 37 in tRNAs that read codons beginning with uridine, leading to the formation of N6-(dimethylallyl)adenosine (i(6)A). The sequence is that of tRNA dimethylallyltransferase from Chlorobium phaeovibrioides (strain DSM 265 / 1930) (Prosthecochloris vibrioformis (strain DSM 265)).